Consider the following 382-residue polypeptide: Mannitol-1-phosphate 5-dehydrogenase (382 aa).

NAD(+) is bound at residue 3–14; sequence VLHFGAGNIGRG.

This sequence belongs to the mannitol dehydrogenase family.

The enzyme catalyses D-mannitol 1-phosphate + NAD(+) = beta-D-fructose 6-phosphate + NADH + H(+). This Sodalis glossinidius (strain morsitans) protein is Mannitol-1-phosphate 5-dehydrogenase.